Consider the following 334-residue polypeptide: Acryloyl-coenzyme A reductase (334 aa).

Cysteine 38 serves as a coordination point for Zn(2+). Residue tyrosine 39 participates in NADP(+) binding. Histidine 60, aspartate 90, cysteine 93, cysteine 96, cysteine 104, and cysteine 146 together coordinate Zn(2+). Residues 173-176 (SGGV) and 195-197 (TTS) contribute to the NADP(+) site.

This sequence belongs to the zinc-containing alcohol dehydrogenase family. In terms of assembly, monomer. The cofactor is Zn(2+).

The catalysed reaction is propanoyl-CoA + NADP(+) = acryloyl-CoA + NADPH + H(+). Plays a role in autotrophic carbon fixation via the 3-hydroxypropionate/4-hydroxybutyrate cycle. Catalyzes the acryloyl-CoA dependent NADPH oxidation and formation of propionyl-CoA. Inactive towards 3-hydroxypropionyl-CoA, NADH and crotonyl-CoA. This Sulfurisphaera tokodaii (strain DSM 16993 / JCM 10545 / NBRC 100140 / 7) (Sulfolobus tokodaii) protein is Acryloyl-coenzyme A reductase.